Reading from the N-terminus, the 328-residue chain is DNA-directed RNA polymerase subunit alpha (328 aa).

The segment at M1–S231 is alpha N-terminal domain (alpha-NTD). The tract at residues M252 to G328 is alpha C-terminal domain (alpha-CTD).

The protein belongs to the RNA polymerase alpha chain family. In terms of assembly, homodimer. The RNAP catalytic core consists of 2 alpha, 1 beta, 1 beta' and 1 omega subunit. When a sigma factor is associated with the core the holoenzyme is formed, which can initiate transcription.

It catalyses the reaction RNA(n) + a ribonucleoside 5'-triphosphate = RNA(n+1) + diphosphate. Its function is as follows. DNA-dependent RNA polymerase catalyzes the transcription of DNA into RNA using the four ribonucleoside triphosphates as substrates. The protein is DNA-directed RNA polymerase subunit alpha of Chlorobium limicola (strain DSM 245 / NBRC 103803 / 6330).